A 637-amino-acid chain; its full sequence is DNA damage-binding protein CMR1 (637 aa).

2 disordered regions span residues 1–91 (MIES…EEEA) and 144–168 (LVDTKDENKRRSANKPDPQFSTERR). Composition is skewed to basic and acidic residues over residues 8-23 (EQERLKNIRENERLMK) and 74-91 (AGHEADSETLKRKYEEEA). WD repeat units follow at residues 185 to 226 (VTPK…FASN), 255 to 295 (HARS…SEEI), 297 to 321 (AGEEDVLLSIFDVLSPSTHPSVYMD), 361 to 401 (VCEK…SVVK), and 431 to 470 (KARQACTSVDFSPRGDQLVGVSYDDVVKVWSMEPGSLFSE). Disordered regions lie at residues 482–508 (SNKPKGAVKKQVPDSASDTGPGLLSWL) and 525–549 (KQEQDAPSPSLSKRPDDVLANPTRI). WD repeat units follow at residues 556-598 (GKWL…LRSL) and 602-637 (NLVTAVPAVTCMHPVLPARLVTGNASGRCTFWSPDP).

This sequence belongs to the WD repeat DDB2/WDR76 family.

Its function is as follows. DNA-binding protein that binds to both single- and double-stranded DNA. Binds preferentially to UV-damaged DNA. May be involved in DNA-metabolic processes. The chain is DNA damage-binding protein CMR1 from Mycosarcoma maydis (Corn smut fungus).